An 878-amino-acid chain; its full sequence is Leucine--tRNA ligase (878 aa).

Positions 56-66 (PYPSGKLHMGH) match the 'HIGH' region motif. A 'KMSKS' region motif is present at residues 630–634 (KMSKS). K633 provides a ligand contact to ATP.

Belongs to the class-I aminoacyl-tRNA synthetase family.

It is found in the cytoplasm. It carries out the reaction tRNA(Leu) + L-leucine + ATP = L-leucyl-tRNA(Leu) + AMP + diphosphate. The protein is Leucine--tRNA ligase of Prochlorococcus marinus (strain MIT 9303).